A 320-amino-acid chain; its full sequence is Protein LATERAL ROOT PRIMORDIUM 1 (320 aa).

The segment at 90–110 (QTTVGTSSNNSGSGSGASGTA) is disordered. 6 residues coordinate Zn(2+): Cys-112, Cys-115, Cys-123, Cys-128, Cys-132, and Cys-139. Residues 112–139 (CQDCGNQAKKECKQRRCRTCCKSRGFDC) constitute a DNA-binding region (zn(2)-C6 fungal-type; degenerate). The disordered stretch occupies residues 150 to 223 (AARRRERQVM…QDGGGSREAW (74 aa)). The span at 168–177 (GSSLSTSSGT) shows a compositional bias: low complexity. The segment covering 193 to 214 (ATSHTSTSNTPPQSFETSSSRQ) has biased composition (polar residues). The short motif at 256–259 (IGGH) is the Required for homo- and heterodimerization element.

It belongs to the SHI protein family. In terms of assembly, homodimer. Restricted to lateral root primordia.

It is found in the nucleus. In terms of biological role, transcription activator that binds DNA on 5'-ACTCTAC-3' and promotes auxin homeostasis-regulating gene expression (e.g. YUC genes), as well as genes affecting stamen development, cell expansion and timing of flowering. Synergistically with other SHI-related proteins, regulates gynoecium, stamen and leaf development in a dose-dependent manner, controlling apical-basal patterning. Promotes style and stigma formation, and influence vascular development during gynoecium development. May also have a role in the formation and/or maintenance of the shoot apical meristem (SAM). Modulates root growth. This is Protein LATERAL ROOT PRIMORDIUM 1 (LRP1) from Arabidopsis thaliana (Mouse-ear cress).